The following is a 305-amino-acid chain: Translation initiation factor eIF2B subunit alpha (305 aa).

An N6-acetyllysine modification is found at lysine 35.

It belongs to the eIF-2B alpha/beta/delta subunits family. Component of the translation initiation factor 2B (eIF2B) complex which is a heterodecamer of two sets of five different subunits: alpha, beta, gamma, delta and epsilon. Subunits alpha, beta and delta comprise a regulatory subcomplex and subunits epsilon and gamma comprise a catalytic subcomplex. Within the complex, the hexameric regulatory complex resides at the center, with the two heterodimeric catalytic subcomplexes bound on opposite sides.

It is found in the cytoplasm. The protein resides in the cytosol. Its activity is regulated as follows. Activated by the chemical integrated stress response (ISR) inhibitor ISRIB which stimulates guanine nucleotide exchange factor activity for both phosphorylated and unphosphorylated eIF2. In terms of biological role, acts as a component of the translation initiation factor 2B (eIF2B) complex, which catalyzes the exchange of GDP for GTP on eukaryotic initiation factor 2 (eIF2) gamma subunit. Its guanine nucleotide exchange factor activity is repressed when bound to eIF2 complex phosphorylated on the alpha subunit, thereby limiting the amount of methionyl-initiator methionine tRNA available to the ribosome and consequently global translation is repressed. The protein is Translation initiation factor eIF2B subunit alpha (EIF2B1) of Macaca fascicularis (Crab-eating macaque).